A 126-amino-acid chain; its full sequence is Fluoride-specific ion channel FluC (126 aa).

The next 4 helical transmembrane spans lie at 3–23 (PLGF…RWGL), 36–56 (YGTL…VGFF), 68–88 (LLAI…SSEA), and 99–119 (WALL…ALGL). Gly-76 and Thr-79 together coordinate Na(+).

The protein belongs to the fluoride channel Fluc/FEX (TC 1.A.43) family.

The protein resides in the cell inner membrane. The catalysed reaction is fluoride(in) = fluoride(out). With respect to regulation, na(+) is not transported, but it plays an essential structural role and its presence is essential for fluoride channel function. Its function is as follows. Fluoride-specific ion channel. Important for reducing fluoride concentration in the cell, thus reducing its toxicity. This chain is Fluoride-specific ion channel FluC, found in Cupriavidus pinatubonensis (strain JMP 134 / LMG 1197) (Cupriavidus necator (strain JMP 134)).